The primary structure comprises 434 residues: Protein arginine N-methyltransferase 2 (434 aa).

The segment at 155–198 (IQGEETTEEERKEEEPSNTSDIIDEQKVEQPKEDLKEDPSSNQE) is disordered. The span at 178–193 (DEQKVEQPKEDLKEDP) shows a compositional bias: basic and acidic residues. Residues 193–434 (PSSNQETYLK…YHPEARFMDV (242 aa)) form the RMT2 domain. Residues tyrosine 200, methionine 230, 258 to 263 (FGMGII), 279 to 281 (EAH), 306 to 307 (WQ), and aspartate 327 each bind S-adenosyl-L-methionine.

It belongs to the class I-like SAM-binding methyltransferase superfamily. RMT2 methyltransferase family. Monomer.

The protein resides in the cytoplasm. It localises to the nucleus. S-adenosyl-L-methionine-dependent protein-arginine N-methyltransferase that methylates the delta-nitrogen atom of arginine residues to form N5-methylarginine (type IV) in target proteins. Monomethylates ribosomal protein L12. The sequence is that of Protein arginine N-methyltransferase 2 from Debaryomyces hansenii (strain ATCC 36239 / CBS 767 / BCRC 21394 / JCM 1990 / NBRC 0083 / IGC 2968) (Yeast).